Consider the following 946-residue polypeptide: Calcium-transporting ATPase type 2C member 2 (946 aa).

Residues 1 to 106 (MVEGRVSEFL…DNSEPVWKKY (106 aa)) lie on the Cytoplasmic side of the membrane. An interaction with ORAI1 region spans residues 71–95 (VDLHTGLSEFSVTQRRLAHGWNEFV). Residues 107–127 (LDQFKNPLILLLLGSALVSVL) traverse the membrane as a helical segment. The Extracellular segment spans residues 128–129 (TK). A helical membrane pass occupies residues 130–150 (EYEDAVSIATAVLVVVTVAFI). Topologically, residues 151–231 (QEYRSEKSLE…EAEPCSKTDS (81 aa)) are cytoplasmic. The chain crosses the membrane as a helical span at residues 232–252 (PLTGGGDLTTLSNIVFMGTLV). The Extracellular segment spans residues 253 to 293 (QYGRGQGVVIGTGESSQFGEVFKMMQAEETPKTPLQKSMDR). Threonine 264 is modified (phosphothreonine). Residues serine 267 and serine 268 each carry the phosphoserine modification. Residues 294–314 (LGKQLTLFSFGIIGLIMLIGW) traverse the membrane as a helical segment. The Cytoplasmic segment spans residues 315 to 331 (SQGKQLLSMFTIGVSLA). Residues valine 332, alanine 333, isoleucine 335, and glutamate 337 each coordinate Ca(2+). The helical transmembrane segment at 332–352 (VAAIPEGLPIVVMVTLVLGVL) threads the bilayer. Residues 353–750 (RMAKKRVIVK…ISALSLITLS (398 aa)) lie on the Extracellular side of the membrane. Aspartate 379 (4-aspartylphosphate intermediate) is an active-site residue. Aspartate 674 and aspartate 678 together coordinate Mg(2+). Residues 751 to 771 (TVFNLPSPLNAMQILWINIIM) traverse the membrane as a helical segment. Residues asparagine 768 and aspartate 772 each coordinate Ca(2+). At 772-804 (DGPPAQSLGVEPVDKDAFRQPPRSVRDTILSRA) the chain is on the cytoplasmic side. Residues 805 to 825 (LILKILMSAAIIISGTLFIFW) form a helical membrane-spanning segment. Over 826–837 (KEMPEDRASTPR) the chain is Extracellular. The chain crosses the membrane as a helical span at residues 838 to 855 (TTTMTFTCFVFFDLFNAL). Topologically, residues 856 to 874 (TCRSQTKLIFEIGFLRNHM) are cytoplasmic. The helical transmembrane segment at 875–895 (FLYSVLGSILGQLAVIYIPPL) threads the bilayer. The Extracellular segment spans residues 896–905 (QRVFQTENLG). Residues 906-926 (ALDLLFLTGLASSVFILSELL) form a helical membrane-spanning segment. Residues 927–946 (KLCEKYCCSPKRVQMHPEDV) lie on the Cytoplasmic side of the membrane.

The protein belongs to the cation transport ATPase (P-type) (TC 3.A.3) family. Type IIA subfamily. In terms of assembly, interacts (via N-terminus) with ORAI1 (via N- and C-termini); this interaction regulates Ca(2+) influx at the plasma membrane. As to expression, highly expressed in the gastrointestinal and respiratory tracts, prostate, thyroid, salivary, and mammary glands. Expressed in colon epithelial cells (at protein level). Expressed in brain and testis (at protein level).

Its subcellular location is the golgi apparatus. It localises to the trans-Golgi network membrane. The protein localises to the cell membrane. It is found in the basolateral cell membrane. It catalyses the reaction Ca(2+)(in) + ATP + H2O = Ca(2+)(out) + ADP + phosphate + H(+). It carries out the reaction Mn(2+)(in) + ATP + H2O = Mn(2+)(out) + ADP + phosphate + H(+). ATP-driven pump that supplies the Golgi apparatus with Ca(2+) and Mn(2+) ions, both essential cofactors for processing and trafficking of newly synthesized proteins in the secretory pathway. Within a catalytic cycle, acquires Ca(2+) or Mn(2+) ions on the cytoplasmic side of the membrane and delivers them to the lumenal side. The transfer of ions across the membrane is coupled to ATP hydrolysis and is associated with a transient phosphorylation that shifts the pump conformation from inward-facing to outward-facing state. Induces Ca(2+) influx independently of its ATP-driven pump function. At the basolateral membrane of mammary epithelial cells, interacts with Ca(2+) channel ORAI1 and mediates Ca(2+) entry independently of the Ca(2+) content of endoplasmic reticulum or Golgi stores. May facilitate transepithelial transport of large quantities of Ca(2+) for milk secretion via activation of Ca(2+) influx channels at the plasma membrane and active Ca(2+) transport at the Golgi apparatus. This Homo sapiens (Human) protein is Calcium-transporting ATPase type 2C member 2.